Consider the following 590-residue polypeptide: Type I inositol polyphosphate 5-phosphatase 1 (590 aa).

The segment at aspartate 47–proline 73 is disordered. Residues tyrosine 48–glutamate 57 show a composition bias toward acidic residues. At serine 60 the chain carries Phosphoserine. Catalytic stretches follow at residues glutamate 445–serine 460 and glycine 523–lysine 538.

It belongs to the inositol polyphosphate 5-phosphatase family. Expressed ubiquitously.

The enzyme catalyses 1D-myo-inositol 1,4,5-trisphosphate + H2O = 1D-myo-inositol 1,4-bisphosphate + phosphate. The catalysed reaction is 1D-myo-inositol 1,3,4,5-tetrakisphosphate + H2O = 1D-myo-inositol 1,3,4-trisphosphate + phosphate. Has phosphatase activity toward Ins(1,4,5)P3 and Ins(1,3,4,5)P4, but not toward Ins(1,4)P2, Ins(1)P. Seems to be involved in the abscisic acid (ABA) signaling pathway. Could also be able to hydrolyze PtdIns(4,5)P2 and PtdIns(3,4,5)P3. The polypeptide is Type I inositol polyphosphate 5-phosphatase 1 (Arabidopsis thaliana (Mouse-ear cress)).